Reading from the N-terminus, the 102-residue chain is Plastocyanin (102 aa).

Residues 1–102 enclose the Plastocyanin-like domain; sequence AKVEVGDEVG…ANMKGTLTVK (102 aa). Positions 37, 87, 90, and 95 each coordinate Cu cation.

It belongs to the plastocyanin family. Cu(2+) is required as a cofactor.

It is found in the plastid. The protein resides in the chloroplast thylakoid membrane. Functionally, participates in electron transfer between P700 and the cytochrome b6-f complex in photosystem I. This chain is Plastocyanin (PETE), found in Dryopteris crassirhizoma (Thick stemmed wood fern).